The primary structure comprises 493 residues: Glutamate--tRNA ligase (493 aa).

Positions 10–20 (PSPTGDPHVGT) match the 'HIGH' region motif. Residues Cys107, Cys109, Cys134, and His136 each contribute to the Zn(2+) site. The 'KMSKS' region motif lies at 251 to 255 (KLSKR). An ATP-binding site is contributed by Lys254.

Belongs to the class-I aminoacyl-tRNA synthetase family. Glutamate--tRNA ligase type 1 subfamily. As to quaternary structure, monomer. It depends on Zn(2+) as a cofactor.

It localises to the cytoplasm. The enzyme catalyses tRNA(Glu) + L-glutamate + ATP = L-glutamyl-tRNA(Glu) + AMP + diphosphate. Catalyzes the attachment of glutamate to tRNA(Glu) in a two-step reaction: glutamate is first activated by ATP to form Glu-AMP and then transferred to the acceptor end of tRNA(Glu). This Ectopseudomonas mendocina (strain ymp) (Pseudomonas mendocina) protein is Glutamate--tRNA ligase.